The chain runs to 376 residues: Queuine tRNA-ribosyltransferase (376 aa).

Asp92 serves as the catalytic Proton acceptor. Residues 92-96, Asp146, Gln190, and Gly217 contribute to the substrate site; that span reads DSGGF. The RNA binding stretch occupies residues 248–254; sequence GVGRPED. Asp267 functions as the Nucleophile in the catalytic mechanism. Residues 272–276 form an RNA binding; important for wobble base 34 recognition region; sequence TRNAR. Zn(2+) contacts are provided by Cys305, Cys307, Cys310, and His337.

This sequence belongs to the queuine tRNA-ribosyltransferase family. Homodimer. Within each dimer, one monomer is responsible for RNA recognition and catalysis, while the other monomer binds to the replacement base PreQ1. Zn(2+) serves as cofactor.

The enzyme catalyses 7-aminomethyl-7-carbaguanine + guanosine(34) in tRNA = 7-aminomethyl-7-carbaguanosine(34) in tRNA + guanine. It functions in the pathway tRNA modification; tRNA-queuosine biosynthesis. Catalyzes the base-exchange of a guanine (G) residue with the queuine precursor 7-aminomethyl-7-deazaguanine (PreQ1) at position 34 (anticodon wobble position) in tRNAs with GU(N) anticodons (tRNA-Asp, -Asn, -His and -Tyr). Catalysis occurs through a double-displacement mechanism. The nucleophile active site attacks the C1' of nucleotide 34 to detach the guanine base from the RNA, forming a covalent enzyme-RNA intermediate. The proton acceptor active site deprotonates the incoming PreQ1, allowing a nucleophilic attack on the C1' of the ribose to form the product. After dissociation, two additional enzymatic reactions on the tRNA convert PreQ1 to queuine (Q), resulting in the hypermodified nucleoside queuosine (7-(((4,5-cis-dihydroxy-2-cyclopenten-1-yl)amino)methyl)-7-deazaguanosine). This Stenotrophomonas maltophilia (strain K279a) protein is Queuine tRNA-ribosyltransferase.